The sequence spans 81 residues: MDILKKSLFFILFLGLVSLSISEEEKRENEDEEDQEDDEQSEEKRGLWSKIKTAGKEAAKAAAKAAGKAALNAVSEAIGEQ.

The signal sequence occupies residues 1–22; it reads MDILKKSLFFILFLGLVSLSIS. A disordered region spans residues 22 to 49; sequence SEEEKRENEDEEDQEDDEQSEEKRGLWS. A propeptide spanning residues 23–45 is cleaved from the precursor; that stretch reads EEEKRENEDEEDQEDDEQSEEKR. Residues 30-41 show a composition bias toward acidic residues; sequence EDEEDQEDDEQS. Ile78 is modified (isoleucine amide). A propeptide spanning residues 80–81 is cleaved from the precursor; sequence EQ.

Belongs to the frog skin active peptide (FSAP) family. Dermaseptin subfamily. Expressed by the skin glands.

Its subcellular location is the secreted. Functionally, antimicrobial peptide. This chain is Dermaseptin-S6, found in Phyllomedusa sauvagei (Sauvage's leaf frog).